The following is a 493-amino-acid chain: Proline--tRNA ligase (493 aa).

The protein belongs to the class-II aminoacyl-tRNA synthetase family. ProS type 3 subfamily. As to quaternary structure, homodimer.

It localises to the cytoplasm. The enzyme catalyses tRNA(Pro) + L-proline + ATP = L-prolyl-tRNA(Pro) + AMP + diphosphate. Catalyzes the attachment of proline to tRNA(Pro) in a two-step reaction: proline is first activated by ATP to form Pro-AMP and then transferred to the acceptor end of tRNA(Pro). The polypeptide is Proline--tRNA ligase (Porphyromonas gingivalis (strain ATCC 33277 / DSM 20709 / CIP 103683 / JCM 12257 / NCTC 11834 / 2561)).